Reading from the N-terminus, the 182-residue chain is Glutamyl-tRNA(Gln) amidotransferase subunit F, mitochondrial (182 aa).

This sequence belongs to the GatF family. In terms of assembly, subunit of the heterotrimeric GatFAB amidotransferase (AdT) complex, composed of A, B and F subunits.

It localises to the mitochondrion inner membrane. It catalyses the reaction L-glutamyl-tRNA(Gln) + L-glutamine + ATP + H2O = L-glutaminyl-tRNA(Gln) + L-glutamate + ADP + phosphate + H(+). In terms of biological role, allows the formation of correctly charged Gln-tRNA(Gln) through the transamidation of misacylated Glu-tRNA(Gln) in the mitochondria. The reaction takes place in the presence of glutamine and ATP through an activated gamma-phospho-Glu-tRNA(Gln). Required for proper protein synthesis within the mitochondrion. The chain is Glutamyl-tRNA(Gln) amidotransferase subunit F, mitochondrial from Candida tropicalis (strain ATCC MYA-3404 / T1) (Yeast).